A 611-amino-acid polypeptide reads, in one-letter code: Leukotriene A-4 hydrolase (611 aa).

Position 73 is an N6-acetyllysine (lysine 73). Residues 135–137 and 267–272 contribute to the a peptide site; these read QCQ and PYGGME. Histidine 296 contributes to the Zn(2+) binding site. Residue glutamate 297 is the Proton acceptor of the active site. 2 residues coordinate Zn(2+): histidine 300 and glutamate 319. Lysine 337 is subject to N6-acetyllysine. Tyrosine 384 (proton donor) is an active-site residue. Serine 416 is modified (phosphoserine). Residue 564–566 coordinates a peptide; the sequence is RMK. An N6-acetyllysine modification is found at lysine 573.

It belongs to the peptidase M1 family. Requires Zn(2+) as cofactor. Phosphorylation at Ser-416 inhibits enzymatic activity.

The protein localises to the cytoplasm. The enzyme catalyses leukotriene A4 + H2O = leukotriene B4. It functions in the pathway lipid metabolism; leukotriene B4 biosynthesis. With respect to regulation, inhibited by bestatin. Subject to suicide inhibition by leukotriene A4. Epoxide hydrolase that catalyzes the final step in the biosynthesis of the pro-inflammatory mediator leukotriene B4. Also has aminopeptidase activity. The protein is Leukotriene A-4 hydrolase (LTA4H) of Chinchilla lanigera (Long-tailed chinchilla).